Reading from the N-terminus, the 680-residue chain is Tumor protein 63 (680 aa).

Residues 1–107 (MNFETSRCAT…MQDSDLSDPM (107 aa)) are transcription activation. Residues 122–157 (QQIQNGSSSTSPYNTDHAQNSVTAPSPYAQPSSTFD) show a composition bias toward polar residues. A disordered region spans residues 122-171 (QQIQNGSSSTSPYNTDHAQNSVTAPSPYAQPSSTFDALSPSPAIPSNTDY). The DNA-binding element occupies 170-362 (DYPGPHSFDV…KADEDSIRKQ (193 aa)). 4 residues coordinate Zn(2+): Cys-244, His-247, Cys-308, and Cys-312. Residues 351 to 360 (DRKADEDSIR) show a composition bias toward basic and acidic residues. Disordered regions lie at residues 351–393 (DRKA…IKKR) and 436–472 (RQQQQQQHQHLLQKQTSMQSQSSYGNSSPPLNKMNSM). The interaction with HIPK2 stretch occupies residues 352–388 (RKADEDSIRKQQVSDSAKNGDGTKRPFRQNTHGIQMT). Polar residues predominate over residues 379–389 (RQNTHGIQMTS). The tract at residues 394–443 (RSPDDELLYLPVRGRETYEMLLKIKESLELMQYLPQHTIETYRQQQQQQH) is oligomerization. The span at 437–463 (QQQQQQHQHLLQKQTSMQSQSSYGNSS) shows a compositional bias: low complexity. The SAM domain occupies 541–607 (PPYPTDCSIV…WKGILDHRQL (67 aa)). The transactivation inhibition stretch occupies residues 610-680 (FSSPPHLLRT…KQQRIKEEGE (71 aa)). A Glycyl lysine isopeptide (Lys-Gly) (interchain with G-Cter in SUMO) cross-link involves residue Lys-676.

This sequence belongs to the p53 family. In terms of assembly, binds DNA as a homotetramer. Isoform composition of the tetramer may determine transactivation activity. Interacts with HIPK2. Interacts with SSRP1, leading to stimulate coactivator activity. Interacts with WWP1. Interacts with PDS5A. Interacts (via activation domain) with NOC2L. The cofactor is Zn(2+). In terms of processing, may be sumoylated. Ubiquitinated. Polyubiquitination involves WWP1 and leads to proteasomal degradation of this protein. As to expression, widely expressed, notably in thymus, prostate, placenta, and skeletal muscle, although the precise isoform varies according to tissue type. Progenitor cell layers of skin, breast and prostate express high levels of DeltaN-type isoforms.

It is found in the nucleus. Functionally, acts as a sequence specific DNA binding transcriptional activator or repressor. The isoforms contain a varying set of transactivation and auto-regulating transactivation inhibiting domains thus showing an isoform specific activity. May be required in conjunction with TP73/p73 for initiation of p53/TP53 dependent apoptosis in response to genotoxic insults and the presence of activated oncogenes. Involved in Notch signaling by probably inducing JAG1 and JAG2. Activates RIPK4 transcription. Plays a role in the regulation of epithelial morphogenesis. The ratio of DeltaN-type and TA*-type isoforms may govern the maintenance of epithelial stem cell compartments and regulate the initiation of epithelial stratification from the undifferentiated embryonal ectoderm. Required for limb formation from the apical ectodermal ridge. Activates transcription of the p21 promoter. The protein is Tumor protein 63 (Tp63) of Rattus norvegicus (Rat).